Consider the following 447-residue polypeptide: Probable ribosomal RNA small subunit methyltransferase B (447 aa).

S-adenosyl-L-methionine is bound by residues 259 to 265, Asp283, Asp310, and Asp329; that span reads CAAPGGK. Cys382 serves as the catalytic Nucleophile.

It belongs to the class I-like SAM-binding methyltransferase superfamily. RsmB/NOP family.

It is found in the cytoplasm. It catalyses the reaction cytidine(967) in 16S rRNA + S-adenosyl-L-methionine = 5-methylcytidine(967) in 16S rRNA + S-adenosyl-L-homocysteine + H(+). Its function is as follows. Specifically methylates the cytosine at position 967 (m5C967) of 16S rRNA. The protein is Probable ribosomal RNA small subunit methyltransferase B of Bacillus subtilis (strain 168).